A 443-amino-acid polypeptide reads, in one-letter code: Phosphoglucosamine mutase (443 aa).

The Phosphoserine intermediate role is filled by Ser-102. Residues Ser-102, Asp-241, Asp-243, and Asp-245 each contribute to the Mg(2+) site. Ser-102 is subject to Phosphoserine.

The protein belongs to the phosphohexose mutase family. It depends on Mg(2+) as a cofactor. Activated by phosphorylation.

It carries out the reaction alpha-D-glucosamine 1-phosphate = D-glucosamine 6-phosphate. Catalyzes the conversion of glucosamine-6-phosphate to glucosamine-1-phosphate. The polypeptide is Phosphoglucosamine mutase (Acinetobacter baylyi (strain ATCC 33305 / BD413 / ADP1)).